Reading from the N-terminus, the 306-residue chain is Thiamine-monophosphate kinase (306 aa).

Residues D27, T41, T42, and D43 each coordinate Mg(2+). H50 provides a ligand contact to substrate. D71 serves as a coordination point for Mg(2+). ATP-binding positions include Y101, 118–119 (GN), and R142. N119 provides a ligand contact to Mg(2+). Residue D207 participates in Mg(2+) binding. Residue S209 coordinates ATP. D210 contacts Mg(2+). Residues E260 and W303 each coordinate substrate.

The protein belongs to the thiamine-monophosphate kinase family. Homodimer.

It catalyses the reaction thiamine phosphate + ATP = thiamine diphosphate + ADP. The protein operates within cofactor biosynthesis; thiamine diphosphate biosynthesis; thiamine diphosphate from thiamine phosphate: step 1/1. Its function is as follows. Catalyzes the ATP-dependent phosphorylation of thiamine-monophosphate (TMP) to form thiamine-pyrophosphate (TPP), the active form of vitamin B1. This Aquifex aeolicus (strain VF5) protein is Thiamine-monophosphate kinase (thiL).